A 309-amino-acid polypeptide reads, in one-letter code: Probable manganese-dependent inorganic pyrophosphatase (309 aa).

Residues H9, D13, D15, D75, H97, and D149 each contribute to the Mn(2+) site.

This sequence belongs to the PPase class C family. It depends on Mn(2+) as a cofactor.

The protein localises to the cytoplasm. It carries out the reaction diphosphate + H2O = 2 phosphate + H(+). This Lactiplantibacillus plantarum (strain ATCC BAA-793 / NCIMB 8826 / WCFS1) (Lactobacillus plantarum) protein is Probable manganese-dependent inorganic pyrophosphatase.